Here is a 263-residue protein sequence, read N- to C-terminus: Probable ABC transporter permease protein slr1045 (263 aa).

Helical transmembrane passes span 12–32 (LWFQ…LHIL), 52–72 (SMAI…IQVA), 97–117 (APVL…AAEI), 140–162 (LVVP…SLFV), 167–186 (GLVI…LNSV), 192–212 (LWDV…IAII), and 234–254 (AVVT…WLMF).

The protein belongs to the MlaE permease family.

It is found in the cell membrane. Could be part of an ABC transporter complex. This Synechocystis sp. (strain ATCC 27184 / PCC 6803 / Kazusa) protein is Probable ABC transporter permease protein slr1045.